A 420-amino-acid chain; its full sequence is Tryptophan synthase beta chain (420 aa).

K99 is modified (N6-(pyridoxal phosphate)lysine).

The protein belongs to the TrpB family. As to quaternary structure, tetramer of two alpha and two beta chains. Pyridoxal 5'-phosphate serves as cofactor.

The catalysed reaction is (1S,2R)-1-C-(indol-3-yl)glycerol 3-phosphate + L-serine = D-glyceraldehyde 3-phosphate + L-tryptophan + H2O. Its pathway is amino-acid biosynthesis; L-tryptophan biosynthesis; L-tryptophan from chorismate: step 5/5. In terms of biological role, the beta subunit is responsible for the synthesis of L-tryptophan from indole and L-serine. The polypeptide is Tryptophan synthase beta chain (Helicobacter hepaticus (strain ATCC 51449 / 3B1)).